A 197-amino-acid polypeptide reads, in one-letter code: Large ribosomal subunit protein uL11 (197 aa).

Belongs to the universal ribosomal protein uL11 family. As to quaternary structure, part of the ribosomal stalk of the 50S ribosomal subunit. Interacts with L10 and the large rRNA to form the base of the stalk. L10 forms an elongated spine to which L12 dimers bind in a sequential fashion forming a multimeric L10(L12)X complex. Post-translationally, one or more lysine residues are methylated.

Functionally, forms part of the ribosomal stalk which helps the ribosome interact with GTP-bound translation factors. This Mycoplasma mobile (strain ATCC 43663 / 163K / NCTC 11711) (Mesomycoplasma mobile) protein is Large ribosomal subunit protein uL11.